We begin with the raw amino-acid sequence, 146 residues long: Hemoglobin subunit beta (146 aa).

The residue at position 1 (T1) is a Blocked amino end (Thr). A Globin domain is found at 2–146; sequence HWTAEERHYI…VAHALTLQYH (145 aa). Heme b is bound by residues H63 and H92.

This sequence belongs to the globin family. In terms of assembly, heterotetramer of two alpha chains and two beta chains. As to expression, red blood cells.

Its function is as follows. Involved in oxygen transport from the lung to the various peripheral tissues. This is Hemoglobin subunit beta (HBB) from Caretta caretta (Loggerhead sea turtle).